The primary structure comprises 149 residues: Altered inheritance of mitochondria protein 11 (149 aa).

The next 2 helical transmembrane spans lie at 29–48 (MMRF…LAIT) and 79–101 (LVLA…CWIW).

Belongs to the AIM11 family.

It is found in the membrane. This is Altered inheritance of mitochondria protein 11 (AIM11) from Vanderwaltozyma polyspora (strain ATCC 22028 / DSM 70294 / BCRC 21397 / CBS 2163 / NBRC 10782 / NRRL Y-8283 / UCD 57-17) (Kluyveromyces polysporus).